Consider the following 377-residue polypeptide: Chaperone protein DnaJ (377 aa).

Residues 5-70 form the J domain; sequence DYYQVLGVAK…QKRAAYDQYG (66 aa). The CR-type zinc finger occupies 137 to 215; sequence GYDTQIRVPS…CHGAGKTKET (79 aa). Residues Cys-150, Cys-153, Cys-167, Cys-170, Cys-189, Cys-192, Cys-203, and Cys-206 each coordinate Zn(2+). 4 CXXCXGXG motif repeats span residues 150-157, 167-174, 189-196, and 203-210; these read CEICHGSG, CPTCNGSG, CPKCHGTG, and CTHCHGAG.

It belongs to the DnaJ family. Homodimer. Zn(2+) is required as a cofactor.

Its subcellular location is the cytoplasm. Participates actively in the response to hyperosmotic and heat shock by preventing the aggregation of stress-denatured proteins and by disaggregating proteins, also in an autonomous, DnaK-independent fashion. Unfolded proteins bind initially to DnaJ; upon interaction with the DnaJ-bound protein, DnaK hydrolyzes its bound ATP, resulting in the formation of a stable complex. GrpE releases ADP from DnaK; ATP binding to DnaK triggers the release of the substrate protein, thus completing the reaction cycle. Several rounds of ATP-dependent interactions between DnaJ, DnaK and GrpE are required for fully efficient folding. Also involved, together with DnaK and GrpE, in the DNA replication of plasmids through activation of initiation proteins. In Paraburkholderia phymatum (strain DSM 17167 / CIP 108236 / LMG 21445 / STM815) (Burkholderia phymatum), this protein is Chaperone protein DnaJ.